A 124-amino-acid polypeptide reads, in one-letter code: Small ribosomal subunit protein uS12c (124 aa).

2 disordered regions span residues 1 to 28 (MPTI…KGCP) and 104 to 124 (ASGV…QPKT). 2 stretches are compositionally biased toward basic residues: residues 11–20 (ERHKSSKKTK) and 109–124 (DRKK…QPKT).

This sequence belongs to the universal ribosomal protein uS12 family. Part of the 30S ribosomal subunit.

It localises to the plastid. It is found in the chloroplast. Its function is as follows. With S4 and S5 plays an important role in translational accuracy. Located at the interface of the 30S and 50S subunits. The polypeptide is Small ribosomal subunit protein uS12c (rps12) (Gracilaria tenuistipitata var. liui (Red alga)).